A 434-amino-acid polypeptide reads, in one-letter code: Nicotinate phosphoribosyltransferase (434 aa).

Histidine 242 carries the phosphohistidine; by autocatalysis modification.

It belongs to the NAPRTase family. Transiently phosphorylated on a His residue during the reaction cycle. Phosphorylation strongly increases the affinity for substrates and increases the rate of nicotinate D-ribonucleotide production. Dephosphorylation regenerates the low-affinity form of the enzyme, leading to product release.

It catalyses the reaction nicotinate + 5-phospho-alpha-D-ribose 1-diphosphate + ATP + H2O = nicotinate beta-D-ribonucleotide + ADP + phosphate + diphosphate. It participates in cofactor biosynthesis; NAD(+) biosynthesis; nicotinate D-ribonucleotide from nicotinate: step 1/1. In terms of biological role, catalyzes the synthesis of beta-nicotinate D-ribonucleotide from nicotinate and 5-phospho-D-ribose 1-phosphate at the expense of ATP. The sequence is that of Nicotinate phosphoribosyltransferase from Bradyrhizobium diazoefficiens (strain JCM 10833 / BCRC 13528 / IAM 13628 / NBRC 14792 / USDA 110).